Consider the following 259-residue polypeptide: Triosephosphate isomerase (259 aa).

10-12 (NWK) provides a ligand contact to substrate. His-102 functions as the Electrophile in the catalytic mechanism. Glu-172 acts as the Proton acceptor in catalysis. Substrate-binding positions include Gly-178, Ser-218, and 239–240 (GG).

This sequence belongs to the triosephosphate isomerase family. As to quaternary structure, homodimer.

It is found in the cytoplasm. It carries out the reaction D-glyceraldehyde 3-phosphate = dihydroxyacetone phosphate. It functions in the pathway carbohydrate biosynthesis; gluconeogenesis. The protein operates within carbohydrate degradation; glycolysis; D-glyceraldehyde 3-phosphate from glycerone phosphate: step 1/1. In terms of biological role, involved in the gluconeogenesis. Catalyzes stereospecifically the conversion of dihydroxyacetone phosphate (DHAP) to D-glyceraldehyde-3-phosphate (G3P). The polypeptide is Triosephosphate isomerase (Leifsonia xyli subsp. xyli (strain CTCB07)).